The sequence spans 246 residues: DNA repair protein RecO (246 aa).

Belongs to the RecO family.

In terms of biological role, involved in DNA repair and RecF pathway recombination. This Nitrosococcus oceani (strain ATCC 19707 / BCRC 17464 / JCM 30415 / NCIMB 11848 / C-107) protein is DNA repair protein RecO.